We begin with the raw amino-acid sequence, 158 residues long: Ribonuclease H (158 aa).

Positions 1–142 constitute an RNase H type-1 domain; it reads MRKQVEIFTD…CDELARAAAM (142 aa). Residues Asp10, Glu48, Asp70, and Asp134 each coordinate Mg(2+).

The protein belongs to the RNase H family. As to quaternary structure, monomer. It depends on Mg(2+) as a cofactor.

The protein resides in the cytoplasm. It carries out the reaction Endonucleolytic cleavage to 5'-phosphomonoester.. Functionally, endonuclease that specifically degrades the RNA of RNA-DNA hybrids. The sequence is that of Ribonuclease H from Cronobacter sakazakii (strain ATCC BAA-894) (Enterobacter sakazakii).